The sequence spans 2148 residues: Polyketide synthase 1 (2148 aa).

The segment at 19–261 (FIFGDQSSCN…TPLAVHAPYH (243 aa)) is N-terminal acylcarrier protein transacylase domain (SAT). A Ketosynthase family 3 (KS3) domain is found at 394-829 (DSKIAIIGMS…GGNTALLVED (436 aa)). Active-site for beta-ketoacyl synthase activity residues include Cys-566, His-701, and His-745. The interval 929–1233 (AFVFSGQGSQ…PSLMRNKDGW (305 aa)) is malonyl-CoA:ACP transacylase (MAT) domain. Catalysis depends on Ser-1018, which acts as the For acyl/malonyl transferase activity. Residues 1310–1624 (TASVHRIVHE…RKVLNTAMPP (315 aa)) form a product template (PT) domain region. The tract at residues 1314-1447 (HRIVHESVDK…SSLHFEQPKV (134 aa)) is N-terminal hotdog fold. The PKS/mFAS DH domain maps to 1314–1619 (HRIVHESVDK…FQGIPRKVLN (306 aa)). The active-site Proton acceptor; for dehydratase activity is His-1346. The segment at 1474–1619 (LNSRMSSGVI…FQGIPRKVLN (146 aa)) is C-terminal hotdog fold. The Proton donor; for dehydratase activity role is filled by Asp-1533. Residues 1619–1655 (NTAMPPPKSQNEAQVHSSPAKSRPKPPGSASSVHSGR) form a disordered region. The span at 1627-1638 (SQNEAQVHSSPA) shows a compositional bias: polar residues. Residues 1678 to 1752 (RDPMQALFKI…DLATHLGFDT (75 aa)) enclose the Carrier 1 domain. An O-(pantetheine 4'-phosphoryl)serine modification is found at Ser-1712. Residues 1756–1769 (DQSSGQSSSCGGLS) show a composition bias toward low complexity. Residues 1756–1796 (DQSSGQSSSCGGLSPRSDSTGEITSNATTPPSLSPRGSVSG) form a disordered region. Polar residues predominate over residues 1771-1796 (RSDSTGEITSNATTPPSLSPRGSVSG). The Carrier 2 domain maps to 1793–1870 (SVSGSQCKDV…SFKHMFQQGH (78 aa)). Ser-1830 is subject to O-(pantetheine 4'-phosphoryl)serine. The tract at residues 1882–2146 (LKQYRATSTL…ERVAAFIRST (265 aa)) is thioesterase (TE) domain. The active-site For thioesterase activity is the Ser-1973.

In terms of biological role, polyketide synthase; part of the Pks1 gene cluster that mediates the biosynthesis of an anthraquinone derivative pigment that contributes to conidial pigmentation that provides protection from UV radiation, heat and cold stress. The polyketide synthase Pks1 produces 1-acetyl-2,4,6,8-tetrahydroxy-9,10-anthraquinone though condensation of acetyl-CoA with malonyl-CoA. The dehydratase EthD and the laccase Mlac1 further convert the anthraquinone derivative into the final conidial pigment. The sequence is that of Polyketide synthase 1 from Metarhizium acridum (strain CQMa 102).